A 365-amino-acid polypeptide reads, in one-letter code: tRNA-specific 2-thiouridylase MnmA (365 aa).

ATP-binding positions include 12–19 and M38; that span reads AMSGGVDS. Residue C108 is the Nucleophile of the active site. Residues C108 and C206 are joined by a disulfide bond. G132 provides a ligand contact to ATP. The interval 156 to 158 is interaction with tRNA; the sequence is KDQ. C206 acts as the Cysteine persulfide intermediate in catalysis. The segment at 312–313 is interaction with tRNA; the sequence is RY.

The protein belongs to the MnmA/TRMU family.

It localises to the cytoplasm. The catalysed reaction is S-sulfanyl-L-cysteinyl-[protein] + uridine(34) in tRNA + AH2 + ATP = 2-thiouridine(34) in tRNA + L-cysteinyl-[protein] + A + AMP + diphosphate + H(+). Catalyzes the 2-thiolation of uridine at the wobble position (U34) of tRNA, leading to the formation of s(2)U34. In Carboxydothermus hydrogenoformans (strain ATCC BAA-161 / DSM 6008 / Z-2901), this protein is tRNA-specific 2-thiouridylase MnmA.